We begin with the raw amino-acid sequence, 114 residues long: Gamma-glutamylcyclotransferase family protein ytfP (114 aa).

It belongs to the gamma-glutamylcyclotransferase family.

The protein localises to the cytoplasm. May play a role in antibiotic biosynthesis. The protein is Gamma-glutamylcyclotransferase family protein ytfP (ytfP) of Citrobacter rodentium (strain ICC168) (Citrobacter freundii biotype 4280).